The chain runs to 179 residues: Large ribosomal subunit protein uL5 (179 aa).

Belongs to the universal ribosomal protein uL5 family. In terms of assembly, part of the 50S ribosomal subunit; part of the 5S rRNA/L5/L18/L25 subcomplex. Contacts the 5S rRNA and the P site tRNA. Forms a bridge to the 30S subunit in the 70S ribosome.

This is one of the proteins that bind and probably mediate the attachment of the 5S RNA into the large ribosomal subunit, where it forms part of the central protuberance. In the 70S ribosome it contacts protein S13 of the 30S subunit (bridge B1b), connecting the 2 subunits; this bridge is implicated in subunit movement. Contacts the P site tRNA; the 5S rRNA and some of its associated proteins might help stabilize positioning of ribosome-bound tRNAs. This chain is Large ribosomal subunit protein uL5, found in Maridesulfovibrio salexigens (strain ATCC 14822 / DSM 2638 / NCIMB 8403 / VKM B-1763) (Desulfovibrio salexigens).